A 663-amino-acid polypeptide reads, in one-letter code: MNKQNNYSDDSIQVLEGLEAVRKRPGMYIGSTDKRGLHHLVYEIVDNSVDEVLNGYGNEIDVTINKDGSISIEDNGRGMPTGIHKSGKPTVEVIFTVLHAGGKFGQGGYKTSGGLHGVGASVVNALSEWLEVEIHRDGNIYHQSFKNGGSPSSGLVKKGKTKKTGTKVTFKPDDTIFKASTSFNFDVLSERLQESAFLLKNLKITLNDLRSGKERQEHYHYEEGIKEFVSYVNEGKEVLHDVATFSGEANGIEVDVAFQYNDQYSESILSFVNNVRTKDGGTHEVGFKTAMTRVFNDYARRINELKTKDKNLDGNDIREGLTAVVSVRIPEELLQFEGQTKSKLGTSEARSAVDSVVADKLPFYLEEKGQLSKSLVKKAIKAQQAREAARKAREDARSGKKNKRKDTLLSGKLTPAQSKNTEKNELYLVEGDSAGGSAKLGRDRKFQAILPLRGKVINTEKARLEDIFKNEEINTIIHTIGAGVGTDFKIEDSNYNRVIIMTDADTDGAHIQVLLLTFFFKYMKPLVQAGRVFIALPPLYKLEKGKGKTKRVEYAWTDEELNKLQKELGKGFTLQRYKGLGEMNPEQLWETTMNPETRTLIRVQVEDEVRSSKRVTTLMGDKVQPRREWIEKHVEFGMQEDQSILDNSEVQVLENDQFDEEEI.

Residues Y7, N47, D74, 114-120 (GLHGVGA), and K341 each bind ATP. The disordered stretch occupies residues 386–416 (REAARKAREDARSGKKNKRKDTLLSGKLTPA). Basic and acidic residues predominate over residues 387 to 398 (EAARKAREDARS). The region spanning 424–538 (NELYLVEGDS…AGRVFIALPP (115 aa)) is the Toprim domain. 3 residues coordinate Mg(2+): E430, D503, and D505.

It belongs to the type II topoisomerase family. ParE type 2 subfamily. As to quaternary structure, heterotetramer composed of ParC and ParE. Requires Mg(2+) as cofactor. Mn(2+) is required as a cofactor. It depends on Ca(2+) as a cofactor.

The catalysed reaction is ATP-dependent breakage, passage and rejoining of double-stranded DNA.. Its function is as follows. Topoisomerase IV is essential for chromosome segregation. It relaxes supercoiled DNA. Performs the decatenation events required during the replication of a circular DNA molecule. The polypeptide is DNA topoisomerase 4 subunit B (Staphylococcus aureus (strain NCTC 8325 / PS 47)).